The chain runs to 1113 residues: Translation initiation factor IF-2 (1113 aa).

Composition is skewed to polar residues over residues 56 to 72 (QSNQ…SSKE), 129 to 139 (KANTSNQSKGV), 162 to 187 (LENN…TQLV), and 194 to 205 (TKNNEPPQQKTS). Disordered stretches follow at residues 56 to 446 (QSNQ…IGEN) and 470 to 504 (LARP…RQRR). The span at 248–265 (PVQPRTQNNQNRQRIPNK) shows a compositional bias: low complexity. Over residues 415–429 (RRSDWDDAAKLEALR) the composition is skewed to basic and acidic residues. Composition is skewed to basic residues over residues 474-483 (AKPKSTKKSN) and 490-504 (TRKR…RQRR). Residues 605–777 (RRPPVVTVMG…VLLVTEVEDL (173 aa)) form the tr-type G domain. Residues 614-621 (GHVDHGKT) form a G1 region. A GTP-binding site is contributed by 614–621 (GHVDHGKT). Residues 639–643 (GITQH) are G2. The interval 664-667 (DTPG) is G3. GTP is bound by residues 664-668 (DTPGH) and 718-721 (NKID). A G4 region spans residues 718–721 (NKID). Residues 754–756 (SAI) are G5.

The protein belongs to the TRAFAC class translation factor GTPase superfamily. Classic translation factor GTPase family. IF-2 subfamily.

It is found in the cytoplasm. Functionally, one of the essential components for the initiation of protein synthesis. Protects formylmethionyl-tRNA from spontaneous hydrolysis and promotes its binding to the 30S ribosomal subunits. Also involved in the hydrolysis of GTP during the formation of the 70S ribosomal complex. The sequence is that of Translation initiation factor IF-2 from Prochlorococcus marinus (strain MIT 9211).